The sequence spans 247 residues: PF03932 family protein CutC (247 aa).

Belongs to the CutC family.

The protein localises to the cytoplasm. This is PF03932 family protein CutC from Klebsiella pneumoniae subsp. pneumoniae (strain ATCC 700721 / MGH 78578).